A 124-amino-acid chain; its full sequence is Large ribosomal subunit protein eL31 (124 aa).

At tyrosine 102 the chain carries Phosphotyrosine.

The protein belongs to the eukaryotic ribosomal protein eL31 family.

This chain is Large ribosomal subunit protein eL31 (RpL31), found in Drosophila melanogaster (Fruit fly).